Here is a 229-residue protein sequence, read N- to C-terminus: UPF0228 protein MA_3119 (229 aa).

Positions 35–66 (STPVNTSTPVNTSTPVNTSTPVNTSTPVSTST) are enriched in low complexity. The disordered stretch occupies residues 35–67 (STPVNTSTPVNTSTPVNTSTPVNTSTPVSTSTI).

The protein belongs to the UPF0228 family.

The polypeptide is UPF0228 protein MA_3119 (Methanosarcina acetivorans (strain ATCC 35395 / DSM 2834 / JCM 12185 / C2A)).